The chain runs to 391 residues: Succinate--CoA ligase [ADP-forming] subunit beta (391 aa).

One can recognise an ATP-grasp domain in the interval 9–248 (KDILRKFGVA…ISEEDPFEVE (240 aa)). ATP contacts are provided by residues lysine 50, 57–59 (GRG), glutamate 103, methionine 106, and glutamate 111. Asparagine 203 and aspartate 217 together coordinate Mg(2+). Substrate contacts are provided by residues asparagine 268 and 325 to 327 (GIV).

It belongs to the succinate/malate CoA ligase beta subunit family. As to quaternary structure, heterotetramer of two alpha and two beta subunits. It depends on Mg(2+) as a cofactor.

The enzyme catalyses succinate + ATP + CoA = succinyl-CoA + ADP + phosphate. It carries out the reaction GTP + succinate + CoA = succinyl-CoA + GDP + phosphate. It functions in the pathway carbohydrate metabolism; tricarboxylic acid cycle; succinate from succinyl-CoA (ligase route): step 1/1. Succinyl-CoA synthetase functions in the citric acid cycle (TCA), coupling the hydrolysis of succinyl-CoA to the synthesis of either ATP or GTP and thus represents the only step of substrate-level phosphorylation in the TCA. The beta subunit provides nucleotide specificity of the enzyme and binds the substrate succinate, while the binding sites for coenzyme A and phosphate are found in the alpha subunit. The sequence is that of Succinate--CoA ligase [ADP-forming] subunit beta from Chlorobium luteolum (strain DSM 273 / BCRC 81028 / 2530) (Pelodictyon luteolum).